The primary structure comprises 626 residues: Glutamine--fructose-6-phosphate aminotransferase [isomerizing] (626 aa).

Cysteine 2 (nucleophile; for GATase activity) is an active-site residue. Positions 2–222 constitute a Glutamine amidotransferase type-2 domain; the sequence is CGIVGYIGPQ…NGELARLTPT (221 aa). SIS domains are found at residues 293–441 and 471–616; these read LPPS…QRQS and YIEA…VDQP. Catalysis depends on lysine 621, which acts as the For Fru-6P isomerization activity.

As to quaternary structure, homodimer.

It localises to the cytoplasm. It catalyses the reaction D-fructose 6-phosphate + L-glutamine = D-glucosamine 6-phosphate + L-glutamate. Its function is as follows. Catalyzes the first step in hexosamine metabolism, converting fructose-6P into glucosamine-6P using glutamine as a nitrogen source. This Thermosynechococcus vestitus (strain NIES-2133 / IAM M-273 / BP-1) protein is Glutamine--fructose-6-phosphate aminotransferase [isomerizing].